The following is a 342-amino-acid chain: Trans-3-hydroxy-L-proline dehydratase (342 aa).

Serine 90 functions as the Proton acceptor in the catalytic mechanism. Residues 91 to 92, aspartate 251, and 256 to 257 each bind substrate; these read GS and GT.

It belongs to the proline racemase family.

It catalyses the reaction trans-3-hydroxy-L-proline = 1-pyrroline-2-carboxylate + H2O. Its function is as follows. Catalyzes the dehydration of trans-3-hydroxy-L-proline (t3LHyp) to Delta(1)-pyrroline-2-carboxylate (Pyr2C). Displays neither proline racemase activity nor 4-hydroxyproline 2-epimerase activity. The polypeptide is Trans-3-hydroxy-L-proline dehydratase (Brucella suis biovar 1 (strain 1330)).